We begin with the raw amino-acid sequence, 264 residues long: MRILLTNDDGIYAPGIKALRQVLEKEGKYELTVVAPDREKSATGHGITVHRPLRAFDITFKNSKVRGVSVDGTPADCVKLAVEALLDKPPDLVLSGINSGPNLGTDVLYSGTVSAAIEAMINGIPAIAISMGSFAFEDEEYLRAAEIFARLLPRILEHPWPRDTILNINIPNVPLEEIKGIAITRLGVRKYINVFEERKDPRGLSYYWMSGEAVNYENGQDTDTAALARKEISITPVHFDLTNYHYLNELKTWVKALEGALATG.

A divalent metal cation contacts are provided by Asp-8, Asp-9, Ser-41, and Asn-98.

Belongs to the SurE nucleotidase family. Requires a divalent metal cation as cofactor.

It is found in the cytoplasm. It carries out the reaction a ribonucleoside 5'-phosphate + H2O = a ribonucleoside + phosphate. Functionally, nucleotidase that shows phosphatase activity on nucleoside 5'-monophosphates. The chain is 5'-nucleotidase SurE from Carboxydothermus hydrogenoformans (strain ATCC BAA-161 / DSM 6008 / Z-2901).